Reading from the N-terminus, the 269-residue chain is Energy-coupling factor transporter transmembrane protein EcfT (269 aa).

The next 6 membrane-spanning stretches (helical) occupy residues 45-65 (RFFL…RVSL), 75-95 (VLWL…GEAI), 110-130 (MAAL…LLTL), 153-173 (FPAH…PTLL), 202-222 (FVPV…DLAL), and 244-264 (CLED…LLFL).

This sequence belongs to the energy-coupling factor EcfT family. In terms of assembly, forms a stable energy-coupling factor (ECF) transporter complex composed of 2 membrane-embedded substrate-binding proteins (S component), 2 ATP-binding proteins (A component) and 2 transmembrane proteins (T component). May be able to interact with more than 1 S component at a time.

It localises to the cell membrane. Its function is as follows. Transmembrane (T) component of an energy-coupling factor (ECF) ABC-transporter complex. Unlike classic ABC transporters this ECF transporter provides the energy necessary to transport a number of different substrates. The chain is Energy-coupling factor transporter transmembrane protein EcfT from Thermanaerovibrio acidaminovorans (strain ATCC 49978 / DSM 6589 / Su883) (Selenomonas acidaminovorans).